The sequence spans 526 residues: Glucose-6-phosphate isomerase (526 aa).

E323 serves as the catalytic Proton donor. Active-site residues include H352 and K454.

Belongs to the GPI family.

It is found in the cytoplasm. The catalysed reaction is alpha-D-glucose 6-phosphate = beta-D-fructose 6-phosphate. It functions in the pathway carbohydrate biosynthesis; gluconeogenesis. The protein operates within carbohydrate degradation; glycolysis; D-glyceraldehyde 3-phosphate and glycerone phosphate from D-glucose: step 2/4. Its function is as follows. Catalyzes the reversible isomerization of glucose-6-phosphate to fructose-6-phosphate. In Prochlorococcus marinus subsp. pastoris (strain CCMP1986 / NIES-2087 / MED4), this protein is Glucose-6-phosphate isomerase.